The following is a 403-amino-acid chain: Argininosuccinate synthase (403 aa).

ATP is bound by residues 12 to 20 (AYSGGLDTS) and alanine 39. L-citrulline is bound at residue tyrosine 91. Glycine 121 lines the ATP pocket. L-aspartate-binding residues include threonine 123, asparagine 127, and aspartate 128. Asparagine 127 lines the L-citrulline pocket. Residues arginine 131, serine 180, serine 189, glutamate 265, and tyrosine 277 each coordinate L-citrulline.

It belongs to the argininosuccinate synthase family. Type 1 subfamily. Homotetramer.

The protein localises to the cytoplasm. The enzyme catalyses L-citrulline + L-aspartate + ATP = 2-(N(omega)-L-arginino)succinate + AMP + diphosphate + H(+). It participates in amino-acid biosynthesis; L-arginine biosynthesis; L-arginine from L-ornithine and carbamoyl phosphate: step 2/3. The chain is Argininosuccinate synthase from Buchnera aphidicola subsp. Acyrthosiphon pisum (strain 5A).